Reading from the N-terminus, the 192-residue chain is Epididymal-specific lipocalin-12 (192 aa).

Positions 1 to 19 (MRLLCGLWLWLSLLKVLQA) are cleaved as a signal peptide. An intrachain disulfide couples Cys-88 to Cys-192.

This sequence belongs to the calycin superfamily. Lipocalin family. In terms of assembly, monomer.

The protein localises to the secreted. Functionally, binds all-trans retinoic acid and may act as a retinoid carrier protein within the epididymis. May play a role in male fertility. This chain is Epididymal-specific lipocalin-12 (LCN12), found in Homo sapiens (Human).